We begin with the raw amino-acid sequence, 585 residues long: Pre-mRNA-splicing factor sap145 (585 aa).

A coiled-coil region spans residues 1–74 (MAEIQTAQNP…NNDNLYNDKK (74 aa)). The segment at 1 to 84 (MAEIQTAQNP…SNGNFYDTNK (84 aa)) is disordered. Positions 12 to 22 (KELEKILERNN) are enriched in basic and acidic residues. Positions 23 to 41 (KQKNKKSRNQVRREKKKLL) are enriched in basic residues. The segment covering 51 to 62 (LAEKNSDDKDQL) has biased composition (basic and acidic residues). Ser145 carries the post-translational modification Phosphoserine. A disordered region spans residues 400–460 (IHAGTGSPVS…SASEPRSQRE (61 aa)). Positions 416 to 439 (LEEFEEEESSEEEESEDVEYPTEE) are enriched in acidic residues.

In terms of assembly, belongs to the 40S cdc5-associated complex (or cwf complex), a spliceosome sub-complex reminiscent of a late-stage spliceosome composed of the U2, U5 and U6 snRNAs and at least brr2, cdc5, cwf2/prp3, cwf3/syf1, cwf4/syf3, cwf5/ecm2, spp42/cwf6, cwf7/spf27, cwf8, cwf9, cwf10, cwf11, cwf12, prp45/cwf13, cwf14, cwf15, cwf16, cwf17, cwf18, cwf19, cwf20, cwf21, cwf22, cwf23, cwf24, cwf25, cwf26, cyp7/cwf27, cwf28, cwf29/ist3, lea1, msl1, prp5/cwf1, prp10/sap155, prp12/sap130, prp17, prp22, sap61, sap62, sap114, sap145, slu7, smb1, smd1, smd3, smf1, smg1 and syf2. Sap145 is part of the SF3b subcomplex of the Prp19-associated nineteen complex (NTC), composed of ini1, prp10, prp12/sap130, sap10/sap155, sap14, sap49 and sap145. Part of the U2 snRNP.

It localises to the nucleus. The protein localises to the cytoplasm. In terms of biological role, involved in pre-mRNA splicing. May be involved in endoplasmic reticulum-associated protein degradation (ERAD) and required for growth at low and high temperatures. The protein is Pre-mRNA-splicing factor sap145 (sap145) of Schizosaccharomyces pombe (strain 972 / ATCC 24843) (Fission yeast).